Reading from the N-terminus, the 250-residue chain is N-acyl homoserine lactonase (250 aa).

Zn(2+) contacts are provided by His-104, His-106, Asp-108, His-109, His-169, Asp-191, and His-235.

The protein belongs to the metallo-beta-lactamase superfamily. In terms of assembly, monomer. Zn(2+) serves as cofactor.

It carries out the reaction an N-acyl-L-homoserine lactone + H2O = an N-acyl-L-homoserine + H(+). This is N-acyl homoserine lactonase from Bacillus cereus.